A 401-amino-acid polypeptide reads, in one-letter code: Voltage-gated potassium channel subunit beta-1 (401 aa).

Positions 90, 91, 97, and 119 each coordinate NADP(+). Tyr-124 acts as the Proton donor/acceptor in catalysis. 17 residues coordinate NADP(+): Asn-192, Ser-222, Arg-223, Gln-248, Trp-277, Ser-278, Pro-279, Leu-280, Ala-281, Cys-282, Lys-288, Arg-298, Gly-357, Ser-359, Gln-363, Glu-366, and Asn-367.

Belongs to the shaker potassium channel beta subunit family. Homotetramer. Interaction with tetrameric potassium channel alpha subunits gives rise to a heterooctamer.

The protein resides in the cytoplasm. Its subcellular location is the membrane. It localises to the cell membrane. It carries out the reaction a primary alcohol + NADP(+) = an aldehyde + NADPH + H(+). The enzyme catalyses a secondary alcohol + NADP(+) = a ketone + NADPH + H(+). In terms of biological role, regulatory subunit of the voltage-gated potassium (Kv) channels composed of pore-forming and potassium-conducting alpha subunits and of regulatory beta subunits. The beta-1/KCNAB1 cytoplasmic subunit mediates closure of delayed rectifier potassium channels by physically obstructing the pore via its N-terminal domain and increases the speed of channel closure for other family members. Promotes the inactivation of KCNA1, KCNA2, KCNA4, KCNA5 and KCNA6 alpha subunit-containing channels. Displays nicotinamide adenine dinucleotide phosphate (NADPH)-dependent aldoketoreductase activity by catalyzing the NADPH-dependent reduction of a variety of endogenous aldehydes and ketones. The binding of NADPH is required for efficient down-regulation of potassium channel activity. Oxidation of the bound NADPH restrains N-terminal domain from blocking the channel, thereby decreasing N-type inactivation of potassium channel activity. This chain is Voltage-gated potassium channel subunit beta-1 (KCNAB1), found in Gallus gallus (Chicken).